Reading from the N-terminus, the 250-residue chain is 2,3-bisphosphoglycerate-dependent phosphoglycerate mutase (250 aa).

Residues 10-17, 23-24, R62, 89-92, K100, 116-117, and 185-186 contribute to the substrate site; these read RHGESQWN, TG, ERHY, RR, and GN. H11 acts as the Tele-phosphohistidine intermediate in catalysis. The active-site Proton donor/acceptor is the E89.

The protein belongs to the phosphoglycerate mutase family. BPG-dependent PGAM subfamily. In terms of assembly, homodimer.

It catalyses the reaction (2R)-2-phosphoglycerate = (2R)-3-phosphoglycerate. It participates in carbohydrate degradation; glycolysis; pyruvate from D-glyceraldehyde 3-phosphate: step 3/5. Functionally, catalyzes the interconversion of 2-phosphoglycerate and 3-phosphoglycerate. The sequence is that of 2,3-bisphosphoglycerate-dependent phosphoglycerate mutase from Klebsiella pneumoniae (strain 342).